We begin with the raw amino-acid sequence, 88 residues long: Large ribosomal subunit protein bL31B (88 aa).

This sequence belongs to the bacterial ribosomal protein bL31 family. Type B subfamily. As to quaternary structure, part of the 50S ribosomal subunit.

In Bordetella pertussis (strain Tohama I / ATCC BAA-589 / NCTC 13251), this protein is Large ribosomal subunit protein bL31B.